Here is a 137-residue protein sequence, read N- to C-terminus: Neutral phospholipase A2 ammodytin I2 (137 aa).

A signal peptide spans 1-16 (MRTLWIVAVCLIGVEG). 7 disulfides stabilise this stretch: cysteine 42–cysteine 131, cysteine 44–cysteine 60, cysteine 59–cysteine 111, cysteine 65–cysteine 137, cysteine 66–cysteine 104, cysteine 73–cysteine 97, and cysteine 91–cysteine 102. The Ca(2+) site is built by tyrosine 43, glycine 45, and glycine 47. Histidine 63 is a catalytic residue. Aspartate 64 serves as a coordination point for Ca(2+). Aspartate 105 is a catalytic residue.

The protein belongs to the phospholipase A2 family. Group II subfamily. D49 sub-subfamily. Requires Ca(2+) as cofactor. In terms of tissue distribution, expressed by the venom gland.

It is found in the secreted. The enzyme catalyses a 1,2-diacyl-sn-glycero-3-phosphocholine + H2O = a 1-acyl-sn-glycero-3-phosphocholine + a fatty acid + H(+). Functionally, snake venom phospholipase A2 (PLA2) that has enzymatic activity but is non-toxic. Displays low binding affinity and enzymatic activity on phosphatidylserine-containing vesicles and HEK-293 plasma membranes, in contrast to ammodytoxins that have high activity on these phospholipids. PLA2 catalyzes the calcium-dependent hydrolysis of the 2-acyl groups in 3-sn-phosphoglycerides. In Vipera ammodytes ammodytes (Western sand viper), this protein is Neutral phospholipase A2 ammodytin I2.